We begin with the raw amino-acid sequence, 145 residues long: D-aminoacyl-tRNA deacylase (145 aa).

The Gly-cisPro motif, important for rejection of L-amino acids signature appears at 137 to 138 (GP).

This sequence belongs to the DTD family. Homodimer.

It localises to the cytoplasm. It carries out the reaction glycyl-tRNA(Ala) + H2O = tRNA(Ala) + glycine + H(+). The enzyme catalyses a D-aminoacyl-tRNA + H2O = a tRNA + a D-alpha-amino acid + H(+). Its function is as follows. An aminoacyl-tRNA editing enzyme that deacylates mischarged D-aminoacyl-tRNAs. Also deacylates mischarged glycyl-tRNA(Ala), protecting cells against glycine mischarging by AlaRS. Acts via tRNA-based rather than protein-based catalysis; rejects L-amino acids rather than detecting D-amino acids in the active site. By recycling D-aminoacyl-tRNA to D-amino acids and free tRNA molecules, this enzyme counteracts the toxicity associated with the formation of D-aminoacyl-tRNA entities in vivo and helps enforce protein L-homochirality. In Teredinibacter turnerae (strain ATCC 39867 / T7901), this protein is D-aminoacyl-tRNA deacylase.